Consider the following 68-residue polypeptide: Copper transport protein ATOX1 (68 aa).

One can recognise an HMA domain in the interval 1 to 63; it reads MPKHEFSVDM…TLEKTGKAVS (63 aa). Cu cation-binding residues include Cys12 and Cys15. Position 47 is a phosphoserine (Ser47). At Lys60 the chain carries N6-acetyllysine.

It belongs to the ATX1 family. As to quaternary structure, homodimer. Interacts with ATP7B. Interacts with ATP7A. Interacts (via dimer form) with SLC31A1 (via C-terminal domain); this interaction improves ATOX1 stability and controls intracellular Cu(I) levels.

Its function is as follows. Binds and deliver cytosolic copper to the copper ATPase proteins. May be important in cellular antioxidant defense. This is Copper transport protein ATOX1 from Canis lupus familiaris (Dog).